The chain runs to 98 residues: Small ribosomal subunit protein bS20 (98 aa).

A compositionally biased stretch (basic residues) spans 1 to 12 (MAPKKTTKKGGP). The interval 1-20 (MAPKKTTKKGGPQKRPSAEK) is disordered.

This sequence belongs to the bacterial ribosomal protein bS20 family.

Binds directly to 16S ribosomal RNA. This Chlamydia caviae (strain ATCC VR-813 / DSM 19441 / 03DC25 / GPIC) (Chlamydophila caviae) protein is Small ribosomal subunit protein bS20.